A 264-amino-acid polypeptide reads, in one-letter code: Diphthine synthase (264 aa).

Residues leucine 10, aspartate 87, valine 90, 115 to 116 (SI), leucine 166, alanine 209, and histidine 234 each bind S-adenosyl-L-methionine.

This sequence belongs to the diphthine synthase family. In terms of assembly, homodimer.

It carries out the reaction 2-[(3S)-amino-3-carboxypropyl]-L-histidyl-[translation elongation factor 2] + 3 S-adenosyl-L-methionine = diphthine-[translation elongation factor 2] + 3 S-adenosyl-L-homocysteine + 3 H(+). The protein operates within protein modification; peptidyl-diphthamide biosynthesis. Functionally, S-adenosyl-L-methionine-dependent methyltransferase that catalyzes the trimethylation of the amino group of the modified target histidine residue in translation elongation factor 2 (EF-2), to form an intermediate called diphthine. The three successive methylation reactions represent the second step of diphthamide biosynthesis. This Thermococcus gammatolerans (strain DSM 15229 / JCM 11827 / EJ3) protein is Diphthine synthase.